Consider the following 423-residue polypeptide: COP9 signalosome complex subunit 3 (423 aa).

Position 2 is an N-acetylalanine (alanine 2). A PCI domain is found at 197–365 (NFERALYFYE…GMVSFHDNPE (169 aa)). Residues 402–423 (QFVQKSMGSQEDDSGNKPSSYS) form a disordered region. Phosphoserine occurs at positions 407, 410, and 423.

The protein belongs to the CSN3 family. Component of the CSN complex, composed of COPS1/GPS1, COPS2, COPS3, COPS4, COPS5, COPS6, COPS7 (COPS7A or COPS7B), COPS8 and COPS9. In the complex, it probably interacts directly with COPS1, COPS4, COPS8 and COPS9. Interacts with CK2 and PKD. Interacts with the translation initiation factor EIF3S6 and IKBKG. Interacts with ERCC6. As to expression, widely expressed.

Its subcellular location is the cytoplasm. The protein localises to the nucleus. In terms of biological role, component of the COP9 signalosome complex (CSN), a complex involved in various cellular and developmental processes. The CSN complex is an essential regulator of the ubiquitin (Ubl) conjugation pathway by mediating the deneddylation of the cullin subunits of SCF-type E3 ligase complexes, leading to decrease the Ubl ligase activity of SCF-type complexes such as SCF, CSA or DDB2. The complex is also involved in phosphorylation of p53/TP53, c-jun/JUN, IkappaBalpha/NFKBIA, ITPK1 and IRF8/ICSBP, possibly via its association with CK2 and PKD kinases. CSN-dependent phosphorylation of TP53 and JUN promotes and protects degradation by the Ubl system, respectively. Essential to maintain the survival of epiblast cells and thus the development of the postimplantation embryo. In Mus musculus (Mouse), this protein is COP9 signalosome complex subunit 3 (Cops3).